We begin with the raw amino-acid sequence, 364 residues long: Acetylserotonin O-methyltransferase 1 (364 aa).

Residues Gly208, Asp231, Asp251, and Lys265 each contribute to the S-adenosyl-L-homocysteine site. The Proton acceptor role is filled by His269. Catalysis depends on residues Glu300 and Glu330.

Belongs to the class I-like SAM-binding methyltransferase superfamily. Cation-independent O-methyltransferase family. Homodimer. In terms of tissue distribution, expressed in leaves, stems and flowers.

The protein localises to the cytoplasm. It catalyses the reaction N-acetylserotonin + S-adenosyl-L-methionine = melatonin + S-adenosyl-L-homocysteine + H(+). Its pathway is aromatic compound metabolism; melatonin biosynthesis; melatonin from serotonin: step 1/2. In terms of biological role, methyltransferase which catalyzes the transfer of a methyl group onto N-acetylserotonin, producing melatonin (N-acetyl-5-methoxytryptamine). This Oryza sativa subsp. japonica (Rice) protein is Acetylserotonin O-methyltransferase 1.